A 287-amino-acid polypeptide reads, in one-letter code: Oxaloacetate decarboxylase (287 aa).

Ser50 contacts substrate. Position 88 (Asp88) interacts with Mg(2+). Arg159 and His235 together coordinate substrate.

It belongs to the isocitrate lyase/PEP mutase superfamily. Oxaloacetate decarboxylase family. As to quaternary structure, homotetramer; dimer of dimers. Requires Mg(2+) as cofactor.

It carries out the reaction oxaloacetate + H(+) = pyruvate + CO2. Functionally, catalyzes the decarboxylation of oxaloacetate into pyruvate. Seems to play a role in maintaining cellular concentrations of bicarbonate and pyruvate. The polypeptide is Oxaloacetate decarboxylase (Pseudomonas paraeruginosa (strain DSM 24068 / PA7) (Pseudomonas aeruginosa (strain PA7))).